We begin with the raw amino-acid sequence, 860 residues long: Leucine--tRNA ligase (860 aa).

The 'HIGH' region motif lies at 42 to 52 (PYPSGRLHMGH). Residues 619 to 623 (KMSKS) carry the 'KMSKS' region motif. ATP is bound at residue Lys-622.

Belongs to the class-I aminoacyl-tRNA synthetase family.

The protein localises to the cytoplasm. The catalysed reaction is tRNA(Leu) + L-leucine + ATP = L-leucyl-tRNA(Leu) + AMP + diphosphate. This Pectobacterium atrosepticum (strain SCRI 1043 / ATCC BAA-672) (Erwinia carotovora subsp. atroseptica) protein is Leucine--tRNA ligase.